Consider the following 933-residue polypeptide: Protein translocase subunit SecA (933 aa).

ATP-binding positions include Q87, 105 to 109 (GEGKT), and D515. Zn(2+) is bound by residues C917, C919, C928, and H929.

This sequence belongs to the SecA family. In terms of assembly, monomer and homodimer. Part of the essential Sec protein translocation apparatus which comprises SecA, SecYEG and auxiliary proteins SecDF-YajC and YidC. It depends on Zn(2+) as a cofactor.

Its subcellular location is the cell inner membrane. The protein resides in the cytoplasm. It catalyses the reaction ATP + H2O + cellular proteinSide 1 = ADP + phosphate + cellular proteinSide 2.. In terms of biological role, part of the Sec protein translocase complex. Interacts with the SecYEG preprotein conducting channel. Has a central role in coupling the hydrolysis of ATP to the transfer of proteins into and across the cell membrane, serving both as a receptor for the preprotein-SecB complex and as an ATP-driven molecular motor driving the stepwise translocation of polypeptide chains across the membrane. This is Protein translocase subunit SecA from Burkholderia cenocepacia (strain ATCC BAA-245 / DSM 16553 / LMG 16656 / NCTC 13227 / J2315 / CF5610) (Burkholderia cepacia (strain J2315)).